Here is a 246-residue protein sequence, read N- to C-terminus: mRNA-decapping protein g5R (246 aa).

One can recognise a Nudix hydrolase domain in the interval K91–K239. The short motif at G128–G149 is the Nudix box element. E134 is a binding site for Mg(2+). Residue E143 is the Nucleophile of the active site. Mg(2+) contacts are provided by E147 and E169.

The protein belongs to the Nudix hydrolase family. DIPP subfamily. Interacts with host RPL23A. Mg(2+) serves as cofactor. Mn(2+) is required as a cofactor.

It localises to the host rough endoplasmic reticulum. It catalyses the reaction diphospho-myo-inositol polyphosphate + H2O = myo-inositol polyphosphate + phosphate.. Functionally, decapping enzyme required for the removal of the 5'-end m7GpppN cap tethered to viral and host mRNAs to allow their decay in cells. May therefore accelerate viral and cellular mRNA turnover to eliminate competing host mRNAs and allow stage-specific synthesis of viral proteins. Acceleration of the turnover of cellular transcripts may even promote the shutoff of host protein synthesis. In addition to the mRNA cap, g5R also efficiently hydrolyzes diphosphoinositol polyphosphates. Down-regulation of the level of PP-InsP5 (diphosphoinositol pentakisphosphate) may play a role in viral manipulation of the cellular secretory pathway, a step necessary for the formation of virions. Binds viral and cellular poly(A) mRNAs, thereby decreasing both types of mRNAs. In African swine fever virus (isolate Pig/Kenya/KEN-50/1950) (ASFV), this protein is mRNA-decapping protein g5R.